Reading from the N-terminus, the 389-residue chain is Gustatory receptor 68a (389 aa).

Residues 1–42 (MKIYQDIYPISKPSQIFAILPFYSGDVDDGFRFGGLGRWYGR) lie on the Cytoplasmic side of the membrane. A helical membrane pass occupies residues 43–63 (LVALIILIGSLTLGEDVLFAS). Topologically, residues 64-82 (KEYRLVASAQGDTEEINRT) are extracellular. N-linked (GlcNAc...) asparagine glycosylation is present at Asn-80. The chain crosses the membrane as a helical span at residues 83–103 (IETLLCIISYTMVVLSSVQNA). Topologically, residues 104-133 (SRHFRTLHDIAKIDEYLLANGFRETYSCRN) are cytoplasmic. Residues 134-154 (LTILVTSAAGGVLAVAFYYIH) form a helical membrane-spanning segment. The Extracellular segment spans residues 155 to 164 (YRSGIGAKRQ). A helical membrane pass occupies residues 165–185 (IILLLIYFLQLLYSTLLALYL). Over 186 to 236 (RTLMMNLAQRIGFLNQKLDTFNLQDCGHMENWRELSNLIEVLCKFRYITEN) the chain is Cytoplasmic. A helical transmembrane segment spans residues 237–257 (INCVAGVSLLFYFGFSFYTVT). N-linked (GlcNAc...) asparagine glycosylation is present at Asn-258. Residues 258-281 (NQSYLAFATLTAGSLSSKTEVADT) are Extracellular-facing. Residues 282-302 (IGLSCIWVLAETITMIVICSA) form a helical membrane-spanning segment. Residues 303–352 (CDGLASEVNGTAQILARIYGKSKQFQNLIDKFLTKSIKQDLQFTAYGFFS) lie on the Cytoplasmic side of the membrane. A helical membrane pass occupies residues 353–373 (IDNSTLFKIFSAVTTYLVILI). At 374–389 (QFKQLEDSKVEDISQA) the chain is on the extracellular side.

This sequence belongs to the insect chemoreceptor superfamily. Gustatory receptor (GR) family. Gr21a subfamily. In terms of tissue distribution, expressed in chemosensory neurons of about 20 male-specific gustatory bristles in the forelegs. No expression is seen in the mechanosensory neurons. In larvae, expressed in the ventral pharyngeal sense organ.

Its subcellular location is the cell membrane. Its function is as follows. Dsx-dependent essential component of pheromone-driven courtship behavior. Recognizes a female pheromone involved in the second step (tapping step) of the courtship display which is essential for efficient execution of the entire courtship sequence and timely mating. Required for detection of the male sex pheromone CH503 which is transferred from males to females during mating and inhibits courtship behavior by other males. Gr68a-expressing neurons in the male foreleg relay signals to the suboesophageal zone (SEZ) and courtship suppression is mediated by the release of the neuropeptide tachykinin from a cluster of 8-10 neurons in the SEZ. This is Gustatory receptor 68a (Gr68a) from Drosophila melanogaster (Fruit fly).